A 765-amino-acid polypeptide reads, in one-letter code: 1,4-alpha-glucan branching enzyme GlgB (765 aa).

The Nucleophile role is filled by Asp-431. Residue Glu-484 is the Proton donor of the active site.

Belongs to the glycosyl hydrolase 13 family. GlgB subfamily. Monomer.

It catalyses the reaction Transfers a segment of a (1-&gt;4)-alpha-D-glucan chain to a primary hydroxy group in a similar glucan chain.. It functions in the pathway glycan biosynthesis; glycogen biosynthesis. Its function is as follows. Catalyzes the formation of the alpha-1,6-glucosidic linkages in glycogen by scission of a 1,4-alpha-linked oligosaccharide from growing alpha-1,4-glucan chains and the subsequent attachment of the oligosaccharide to the alpha-1,6 position. The chain is 1,4-alpha-glucan branching enzyme GlgB from Synechococcus sp. (strain CC9311).